We begin with the raw amino-acid sequence, 1161 residues long: Translation initiation factor IF-2 (1161 aa).

The interval 67-561 (KSSFKAANEQ…RRAMELRAAK (495 aa)) is disordered. Residues 83–105 (QNKDSNSRSKPLNKEKPSKESLN) show a composition bias toward basic and acidic residues. The segment covering 139 to 154 (SRISNLQSQVLPNSHN) has biased composition (polar residues). 2 stretches are compositionally biased toward basic and acidic residues: residues 164-180 (NPNEKKNSTKIVQEKKS) and 211-220 (KDIKANKKND). 2 stretches are compositionally biased toward low complexity: residues 224–250 (NQRPQQANRLNNNNNFPKKNINNPRIK) and 268–282 (NSNRQNSNSRQPPSN). Polar residues-rich tracts occupy residues 295-311 (RQVTPNRPSNPNRQGVS), 352-362 (RQGAPNRQGSP), and 380-393 (LNRSGSKFNNQNPS). Over residues 412–432 (ASDKEKLNRSNFEKQKVEPPK) the composition is skewed to basic and acidic residues. A compositionally biased stretch (polar residues) spans 440–461 (SRLNASPTAKKTPHRSFTNNSK). Basic and acidic residues-rich tracts occupy residues 464–478 (GRSDWDDSAKLEALR) and 543–561 (KETTRQRQKRRAMELRAAK). One can recognise a tr-type G domain in the interval 653–830 (KRPPVITVMG…EVEDLQANPE (178 aa)). The tract at residues 662–669 (GHVDHGKT) is G1. 662 to 669 (GHVDHGKT) is a GTP binding site. Residues 687 to 691 (GITQH) form a G2 region. The G3 stretch occupies residues 712–715 (DTPG). Residues 712–716 (DTPGH) and 766–769 (NKID) each bind GTP. The interval 766 to 769 (NKID) is G4. A G5 region spans residues 802-804 (SAI).

Belongs to the TRAFAC class translation factor GTPase superfamily. Classic translation factor GTPase family. IF-2 subfamily.

It localises to the cytoplasm. Its function is as follows. One of the essential components for the initiation of protein synthesis. Protects formylmethionyl-tRNA from spontaneous hydrolysis and promotes its binding to the 30S ribosomal subunits. Also involved in the hydrolysis of GTP during the formation of the 70S ribosomal complex. This chain is Translation initiation factor IF-2, found in Prochlorococcus marinus (strain MIT 9515).